We begin with the raw amino-acid sequence, 331 residues long: D-alanine--D-alanine ligase (331 aa).

An ATP-grasp domain is found at 112 to 314 (KRIWRSEGLP…YEDLCLRLLA (203 aa)). 138-193 (LQTLGAPMIVKPAREGSTIGLSKVHQAQQCASAYLLAARYDPEVLCEQFIAGDELT) is a binding site for ATP. 3 residues coordinate Mg(2+): Asp267, Glu281, and Asn283.

This sequence belongs to the D-alanine--D-alanine ligase family. Requires Mg(2+) as cofactor. Mn(2+) is required as a cofactor.

It is found in the cytoplasm. The enzyme catalyses 2 D-alanine + ATP = D-alanyl-D-alanine + ADP + phosphate + H(+). It participates in cell wall biogenesis; peptidoglycan biosynthesis. Cell wall formation. The chain is D-alanine--D-alanine ligase from Verminephrobacter eiseniae (strain EF01-2).